We begin with the raw amino-acid sequence, 323 residues long: tRNA U34 carboxymethyltransferase (323 aa).

Carboxy-S-adenosyl-L-methionine is bound by residues Lys91, Trp105, Lys110, Gly130, 152-154 (DPT), 181-182 (IE), Met196, Tyr200, and Arg315.

The protein belongs to the class I-like SAM-binding methyltransferase superfamily. CmoB family. As to quaternary structure, homotetramer.

The catalysed reaction is carboxy-S-adenosyl-L-methionine + 5-hydroxyuridine(34) in tRNA = 5-carboxymethoxyuridine(34) in tRNA + S-adenosyl-L-homocysteine + H(+). Its function is as follows. Catalyzes carboxymethyl transfer from carboxy-S-adenosyl-L-methionine (Cx-SAM) to 5-hydroxyuridine (ho5U) to form 5-carboxymethoxyuridine (cmo5U) at position 34 in tRNAs. The polypeptide is tRNA U34 carboxymethyltransferase (Salmonella typhi).